The following is a 123-amino-acid chain: Histone H2B 2 (123 aa).

The tract at residues 1–32 (MAPPKPSAKGAKKAAKTVTKPKDGKKRRHARK) is disordered. Ser110 carries an O-linked (GlcNAc) serine glycan. A Glycyl lysine isopeptide (Lys-Gly) (interchain with G-Cter in ubiquitin) cross-link involves residue Lys118.

This sequence belongs to the histone H2B family. As to quaternary structure, the nucleosome is a histone octamer containing two molecules each of H2A, H2B, H3 and H4 assembled in one H3-H4 heterotetramer and two H2A-H2B heterodimers. The octamer wraps approximately 147 bp of DNA. Post-translationally, monoubiquitination of Lys-118 gives a specific tag for epigenetic transcriptional activation and is also prerequisite for histone H3 'Lys-4' and 'Lys-79' methylation. In terms of processing, glcNAcylation at Ser-110 promotes monoubiquitination of Lys-118. It fluctuates in response to extracellular glucose, and associates with transcribed genes.

Its subcellular location is the nucleus. The protein resides in the chromosome. Its function is as follows. Core component of nucleosome. Nucleosomes wrap and compact DNA into chromatin, limiting DNA accessibility to the cellular machineries which require DNA as a template. Histones thereby play a central role in transcription regulation, DNA repair, DNA replication and chromosomal stability. DNA accessibility is regulated via a complex set of post-translational modifications of histones, also called histone code, and nucleosome remodeling. This is Histone H2B 2 (his-4) from Caenorhabditis elegans.